The following is a 487-amino-acid chain: FAD-dependent oxidoreductase domain-containing protein 1 (487 aa).

Residues 62–82 (EQADVVIIGGGILGLSVAFWL) form a helical membrane-spanning segment.

In terms of assembly, associates with components of the mitochondrial respiratory chain complex I. Requires FAD as cofactor.

The protein localises to the mitochondrion inner membrane. Required for the assembly of the mitochondrial membrane respiratory chain NADH dehydrogenase (Complex I). Involved in mid-late stages of complex I assembly. The protein is FAD-dependent oxidoreductase domain-containing protein 1 (Foxred1) of Mus musculus (Mouse).